Consider the following 544-residue polypeptide: Protein nucleotidyltransferase YdiU (544 aa).

Residues glycine 133, glycine 135, arginine 136, lysine 155, aspartate 167, glycine 168, arginine 218, and arginine 225 each contribute to the ATP site. Aspartate 294 (proton acceptor) is an active-site residue. Residues asparagine 295 and aspartate 304 each contribute to the Mg(2+) site. Residue aspartate 304 participates in ATP binding.

The protein belongs to the SELO family. It depends on Mg(2+) as a cofactor. Mn(2+) is required as a cofactor.

The catalysed reaction is L-seryl-[protein] + ATP = 3-O-(5'-adenylyl)-L-seryl-[protein] + diphosphate. It carries out the reaction L-threonyl-[protein] + ATP = 3-O-(5'-adenylyl)-L-threonyl-[protein] + diphosphate. It catalyses the reaction L-tyrosyl-[protein] + ATP = O-(5'-adenylyl)-L-tyrosyl-[protein] + diphosphate. The enzyme catalyses L-histidyl-[protein] + UTP = N(tele)-(5'-uridylyl)-L-histidyl-[protein] + diphosphate. The catalysed reaction is L-seryl-[protein] + UTP = O-(5'-uridylyl)-L-seryl-[protein] + diphosphate. It carries out the reaction L-tyrosyl-[protein] + UTP = O-(5'-uridylyl)-L-tyrosyl-[protein] + diphosphate. Its function is as follows. Nucleotidyltransferase involved in the post-translational modification of proteins. It can catalyze the addition of adenosine monophosphate (AMP) or uridine monophosphate (UMP) to a protein, resulting in modifications known as AMPylation and UMPylation. The sequence is that of Protein nucleotidyltransferase YdiU from Cupriavidus metallidurans (strain ATCC 43123 / DSM 2839 / NBRC 102507 / CH34) (Ralstonia metallidurans).